We begin with the raw amino-acid sequence, 557 residues long: ETHYLENE INSENSITIVE 3-like 5 protein (557 aa).

Disordered stretches follow at residues 1–23 (MVEVQDLEPLSPIQDYDEDDLEE) and 61–96 (NLNSVISSPSSSTSASSSSSSSVIVRRTEASRRKKM). A compositionally biased stretch (low complexity) spans 64–82 (SVISSPSSSTSASSSSSSS). A coiled-coil region spans residues 270–311 (ERVRRLARQSKCLQDKMMAKETDTWSRVLNQEEARLNRLKIS).

It belongs to the EIN3 family.

It localises to the nucleus. In terms of biological role, putative transcription factor that may be involved in the ethylene response pathway. This Arabidopsis thaliana (Mouse-ear cress) protein is ETHYLENE INSENSITIVE 3-like 5 protein (EIL5).